Reading from the N-terminus, the 174-residue chain is MCEDKKTDSRSQQECQKELEELRERLKDLENEIKKKEEEVREYTSHLQRLQADFDNYKKQMEKQELEIIKNANERLILKLLDVYEDLERAIENQDSSMDGLEVIYRKFRDTLTKEGLSEIPAEGEKFDPFLHEAVMVEDHDGYEDGIIIEELSRGYRLNDRIIKHSIVKVCKKS.

It belongs to the GrpE family. As to quaternary structure, homodimer.

The protein localises to the cytoplasm. Participates actively in the response to hyperosmotic and heat shock by preventing the aggregation of stress-denatured proteins, in association with DnaK and GrpE. It is the nucleotide exchange factor for DnaK and may function as a thermosensor. Unfolded proteins bind initially to DnaJ; upon interaction with the DnaJ-bound protein, DnaK hydrolyzes its bound ATP, resulting in the formation of a stable complex. GrpE releases ADP from DnaK; ATP binding to DnaK triggers the release of the substrate protein, thus completing the reaction cycle. Several rounds of ATP-dependent interactions between DnaJ, DnaK and GrpE are required for fully efficient folding. The sequence is that of Protein GrpE from Methanothermobacter thermautotrophicus (strain ATCC 29096 / DSM 1053 / JCM 10044 / NBRC 100330 / Delta H) (Methanobacterium thermoautotrophicum).